The chain runs to 378 residues: Small ribosomal subunit protein bS1 (378 aa).

S1 motif domains lie at 1–66 (ETVT…VSRR), 87–155 (GMEV…LGLK), 172–242 (GTKL…LGLK), 259–329 (GDRV…LGVK), and 346–378 (GAIV…ASEA).

This sequence belongs to the bacterial ribosomal protein bS1 family.

In terms of biological role, binds mRNA; thus facilitating recognition of the initiation point. It is needed to translate mRNA with a short Shine-Dalgarno (SD) purine-rich sequence. The chain is Small ribosomal subunit protein bS1 (rpsA) from Providencia sp.